The primary structure comprises 156 residues: MPRKGPVPKREVLPDPVYNSVKVAKLINKVMWDGKKSLAQKICYGAFDIIREKTGRDPLEVFEEALNNVMPVLEVRPRRVGGATYQVPMEVRPERRLSLGIRWIVEYARQRSGKSMMEKLAAEIIDAANNTGGSVKKKEDTHRMAEANKAFAHYRW.

Belongs to the universal ribosomal protein uS7 family. Part of the 30S ribosomal subunit. Contacts proteins S9 and S11.

Its function is as follows. One of the primary rRNA binding proteins, it binds directly to 16S rRNA where it nucleates assembly of the head domain of the 30S subunit. Is located at the subunit interface close to the decoding center, probably blocks exit of the E-site tRNA. The polypeptide is Small ribosomal subunit protein uS7 (Caldanaerobacter subterraneus subsp. tengcongensis (strain DSM 15242 / JCM 11007 / NBRC 100824 / MB4) (Thermoanaerobacter tengcongensis)).